A 1049-amino-acid polypeptide reads, in one-letter code: Probable ATP-dependent permease (1049 aa).

The first 25 residues, 1-25 (MGSHRRYLYYSILSFLLLSCSVVLA), serve as a signal peptide directing secretion. Over 26–324 (KQDKTPFFEG…KDPTVSWQGK (299 aa)) the chain is Lumenal. Residues Asn-50, Asn-114, Asn-165, and Asn-221 are each glycosylated (N-linked (GlcNAc...) asparagine). Residues 325 to 345 (LVLALTAVMVLALFTFATFYI) form a helical membrane-spanning segment. Residues 346 to 463 (SKSPLFRNGL…ISMDRKSFSK (118 aa)) are Cytoplasmic-facing. The 248-residue stretch at 384–631 (LSFENITYSV…LRNEGYICPD (248 aa)) folds into the ABC transporter domain. ATP is bound at residue 423 to 430 (GGSGAGKT). Residues 464–481 (IIGFVDQDDFLLPTLTVF) form a helical membrane-spanning segment. Residues 482–793 (ETVLNSALLR…SFKNMYRNPK (312 aa)) lie on the Lumenal side of the membrane. A phosphoserine mark is found at Ser-659 and Ser-702. The region spanning 793 to 1044 (KLLLGNYLLT…IMGYLALKWI (252 aa)) is the ABC transmembrane type-2 domain. The helical transmembrane segment at 794–814 (LLLGNYLLTILLSLFLGTLYY) threads the bilayer. Residues 815–828 (NVSNDISGFQNRMG) lie on the Cytoplasmic side of the membrane. Residues 829–849 (LFFFILTYFGFVTFTGLSSFA) form a helical membrane-spanning segment. Residues 850 to 877 (LERIIFIKERSNNYYSPLAYYISKIMSE) are Lumenal-facing. A helical membrane pass occupies residues 878–898 (VVPLRVVPPILLSLIVYPMTG). Topologically, residues 899-909 (LNMKDNAFFKC) are cytoplasmic. Residues 910-930 (IGILILFNLGISLEILTIGII) form a helical membrane-spanning segment. At 931-937 (FEDLNNS) the chain is on the lumenal side. Asn-935 is a glycosylation site (N-linked (GlcNAc...) asparagine). The helical transmembrane segment at 938-958 (IILSVLVLLGSLLFSGLFINT) threads the bilayer. The Cytoplasmic portion of the chain corresponds to 959–1000 (KNITNVAFKYLKNFSVFYYAYESLLINEVKTLMLKERKYGLN). A helical membrane pass occupies residues 1001 to 1021 (IEVPGATILSTFGFVVQNLVF). The Lumenal portion of the chain corresponds to 1022–1024 (DIK). Residues 1025–1045 (ILALFNVVFLIMGYLALKWIV) form a helical membrane-spanning segment. The Cytoplasmic segment spans residues 1046–1049 (VEQK).

Belongs to the ABC transporter superfamily. ABCG family. Eye pigment precursor importer (TC 3.A.1.204) subfamily.

It is found in the endoplasmic reticulum membrane. The sequence is that of Probable ATP-dependent permease (ADP1) from Saccharomyces cerevisiae (strain ATCC 204508 / S288c) (Baker's yeast).